The following is a 588-amino-acid chain: MRFSGFVSGLGLGLLTAVSASPAAFPAPASIPDPIPAPVAPASPAIEERAAKVTVAVPSGTVVGSSSGKVDSFRGIPFADPPTGSLRLRPPKRLSKSLGTFDASGLSAAACPQMFISSGGQSVITEFLSDFLAVPFLTPITGQEDCLTITVQRPAGTKAGDKLPVLFWIFGGGFELGSSAMYDGTSLLSTAIDQSQPFIYVAVNYRVAGFGFMPGAEIKKDGSSNLGLLDQRMGLEWVADNIASFGGDPEKVTIWGESAGSISVLDQMVLYGGDASYKGKSLFRGAIMNSGTIVPAEPVDSDKAQSIYDTVVKTGGCSGASDTLECLRGLSYDKFLNAANSVPGLLSYNSLALSYLPRPDGKVLPKSPDVLVATGQYHAVPMITGCQEDEGTLFALFQPNVTTTSRLVEYLQNLYFTQATKQQVTALVNTYPTTLSTGSPYRTGLLNEVFPGFKRRAAILGDLVVSLTRRIFLQAAANSNPDVPSWSYLASYDYGTPILGTFHGSDLLQVFYGLLPNNAMRSVRTYYFNFVYNLDPNKGVTKYAKWPEWKESKKLMWFETANKNSIINDDFRQDSYEFIAANAGALVV.

A signal peptide spans 1–20 (MRFSGFVSGLGLGLLTAVSA). S258 (acyl-ester intermediate) is an active-site residue. N400 carries an N-linked (GlcNAc...) asparagine glycan.

The protein belongs to the type-B carboxylesterase/lipase family.

The protein resides in the secreted. It catalyses the reaction a triacylglycerol + H2O = a diacylglycerol + a fatty acid + H(+). Functionally, secreted acylglycerol lipase required for efficient utilization of saturated triglyceride lipids. Is not involved in virulence. The chain is Secreted triacylglycerol lipase LIP1 from Gibberella zeae (strain ATCC MYA-4620 / CBS 123657 / FGSC 9075 / NRRL 31084 / PH-1) (Wheat head blight fungus).